The primary structure comprises 274 residues: Penicillin-insensitive murein endopeptidase (274 aa).

An N-terminal signal peptide occupies residues 1–19; that stretch reads MKKTAIALLAWFVSSASLA. Cystine bridges form between C44–C265, C187–C235, and C216–C223. 6 residues coordinate Zn(2+): H110, H113, D120, D147, H150, and H211. The tract at residues 225–274 is disordered; it reads DQPLPPPGDGCGAELQSWFEPPKPGTTKPEKKTPPPLPPSCQALLDEHVL.

This sequence belongs to the peptidase M74 family. As to quaternary structure, dimer. Zn(2+) serves as cofactor.

It is found in the periplasm. Murein endopeptidase that cleaves the D-alanyl-meso-2,6-diamino-pimelyl amide bond that connects peptidoglycan strands. Likely plays a role in the removal of murein from the sacculus. The sequence is that of Penicillin-insensitive murein endopeptidase from Salmonella paratyphi A (strain AKU_12601).